The sequence spans 226 residues: 3-isopropylmalate dehydratase small subunit (226 aa).

The interval 204-226 (EAETVESAREPEAVEWAGPLADR) is disordered.

Belongs to the LeuD family. LeuD type 1 subfamily. In terms of assembly, heterodimer of LeuC and LeuD.

The enzyme catalyses (2R,3S)-3-isopropylmalate = (2S)-2-isopropylmalate. It participates in amino-acid biosynthesis; L-leucine biosynthesis; L-leucine from 3-methyl-2-oxobutanoate: step 2/4. Functionally, catalyzes the isomerization between 2-isopropylmalate and 3-isopropylmalate, via the formation of 2-isopropylmaleate. The polypeptide is 3-isopropylmalate dehydratase small subunit (Bifidobacterium animalis subsp. lactis (strain AD011)).